Reading from the N-terminus, the 77-residue chain is Dermatoxin-A1 (77 aa).

The signal sequence occupies residues 1-22; the sequence is MAFLKKSLFLVLFLGLVPLFLC. A propeptide spanning residues 23 to 42 is cleaved from the precursor; that stretch reads ENEKREGENEKEENDDQSEE. Position 76 is a glutamine amide (glutamine 76).

This sequence belongs to the frog skin active peptide (FSAP) family. Dermatoxin subfamily. Expressed by the skin glands.

The protein resides in the secreted. Possesses a potent antimicrobial activity against Gram-positive and Gram-negative bacteria. Probably acts by disturbing membrane functions with its amphipathic structure. The polypeptide is Dermatoxin-A1 (Agalychnis annae (Blue-sided leaf frog)).